The primary structure comprises 526 residues: Exodeoxyribonuclease 7 large subunit (526 aa).

The disordered stretch occupies residues 499–526 (AGEDGTPSQAPKKRPARAGEPTKQGSLF).

This sequence belongs to the XseA family. As to quaternary structure, heterooligomer composed of large and small subunits.

Its subcellular location is the cytoplasm. The enzyme catalyses Exonucleolytic cleavage in either 5'- to 3'- or 3'- to 5'-direction to yield nucleoside 5'-phosphates.. Its function is as follows. Bidirectionally degrades single-stranded DNA into large acid-insoluble oligonucleotides, which are then degraded further into small acid-soluble oligonucleotides. The polypeptide is Exodeoxyribonuclease 7 large subunit (Sinorhizobium medicae (strain WSM419) (Ensifer medicae)).